A 440-amino-acid polypeptide reads, in one-letter code: Glycerophosphocholine cholinephosphodiesterase ENPP6 (440 aa).

The first 22 residues, 1 to 22 (MAGKLWTFLLLFGFSWVWPASA), serve as a signal peptide directing secretion. Substrate contacts are provided by D32, S71, and N92. Zn(2+) is bound by residues D32 and S71. S71 serves as the catalytic Nucleophile. The residue at position 71 (S71) is a Phosphoserine. N-linked (GlcNAc...) asparagine glycans are attached at residues N100 and N118. A disulfide bridge connects residues C142 and C154. Substrate is bound at residue D193. Residues D193, H197, D240, and H241 each contribute to the Zn(2+) site. H241 lines the substrate pocket. N-linked (GlcNAc...) asparagine glycosylation occurs at N341. A substrate-binding site is contributed by H354. Position 354 (H354) interacts with Zn(2+). N404 carries an N-linked (GlcNAc...) asparagine glycan. The GPI-anchor amidated serine moiety is linked to residue S419. A propeptide spans 420 to 440 (SSPSIPPNSCALVLILLLYFV) (removed in mature form).

It belongs to the nucleotide pyrophosphatase/phosphodiesterase family. Homodimer; disulfide-linked. Homotetramer. The cofactor is Zn(2+).

The protein localises to the cell membrane. The catalysed reaction is sn-glycerol 3-phosphocholine + H2O = phosphocholine + glycerol + H(+). It catalyses the reaction a 1-acyl-sn-glycero-3-phosphocholine + H2O = a 1-acyl-sn-glycerol + phosphocholine + H(+). The enzyme catalyses a 1-O-alkyl-sn-glycero-3-phosphocholine + H2O = a 1-O-alkyl-sn-glycerol + phosphocholine + H(+). It carries out the reaction 1-dodecanoyl-sn-glycero-3-phosphocholine + H2O = 1-dodecanoyl-sn-glycerol + phosphocholine + H(+). The catalysed reaction is 1-hexadecanoyl-sn-glycero-3-phosphocholine + H2O = 1-hexadecanoyl-sn-glycerol + phosphocholine + H(+). It catalyses the reaction 1-(5Z,8Z,11Z,14Z-eicosatetraenoyl)-sn-glycero-3-phosphocholine + H2O = 1-(5Z,8Z,11Z,14Z-eicosatetraenoyl)-sn-glycerol + phosphocholine + H(+). The enzyme catalyses 1-tetradecanoyl-sn-glycero-3-phosphocholine + H2O = 1-tetradecanoyl-sn-glycerol + phosphocholine + H(+). It carries out the reaction sphing-4-enine-phosphocholine + H2O = sphing-4-enine + phosphocholine + H(+). The catalysed reaction is 1-(9Z-octadecenoyl)-sn-glycero-3-phosphocholine + H2O = 1-(9Z-octadecenoyl)-sn-glycerol + phosphocholine + H(+). It catalyses the reaction 1-(9Z,12Z)-octadecadienoyl-sn-glycero-3-phosphocholine + H2O = 1-(9Z,12Z-octadecadienoyl)-sn-glycerol + phosphocholine + H(+). The enzyme catalyses glycero-2-phosphocholine + H2O = phosphocholine + glycerol + H(+). Its activity is regulated as follows. Inhibited by EDTA and EGTA in vitro. In terms of biological role, choline-specific glycerophosphodiesterase that hydrolyzes glycerophosphocholine (GPC) and lysophosphatidylcholine (LPC) and contributes to supplying choline to the cells. Has a preference for LPC with short (12:0 and 14:0) or polyunsaturated (18:2 and 20:4) fatty acids. In vitro, hydrolyzes only choline-containing lysophospholipids, such as sphingosylphosphorylcholine (SPC), platelet-activating factor (PAF) and lysoPAF, but not other lysophospholipids. The polypeptide is Glycerophosphocholine cholinephosphodiesterase ENPP6 (Rattus norvegicus (Rat)).